The chain runs to 323 residues: Beta-ketoacyl-[acyl-carrier-protein] synthase III (323 aa).

Residues Cys113 and His250 contribute to the active site. The interval 251–255 is ACP-binding; sequence QANKR. The active site involves Asn280.

The protein belongs to the thiolase-like superfamily. FabH family. In terms of assembly, homodimer.

The protein localises to the cytoplasm. The enzyme catalyses malonyl-[ACP] + acetyl-CoA + H(+) = 3-oxobutanoyl-[ACP] + CO2 + CoA. The protein operates within lipid metabolism; fatty acid biosynthesis. Functionally, catalyzes the condensation reaction of fatty acid synthesis by the addition to an acyl acceptor of two carbons from malonyl-ACP. Catalyzes the first condensation reaction which initiates fatty acid synthesis and may therefore play a role in governing the total rate of fatty acid production. Possesses both acetoacetyl-ACP synthase and acetyl transacylase activities. Its substrate specificity determines the biosynthesis of branched-chain and/or straight-chain of fatty acids. The sequence is that of Beta-ketoacyl-[acyl-carrier-protein] synthase III from Brucella suis (strain ATCC 23445 / NCTC 10510).